The chain runs to 267 residues: Sulfur carrier protein FdhD (267 aa).

C108 acts as the Cysteine persulfide intermediate in catalysis.

Belongs to the FdhD family.

The protein resides in the cytoplasm. Functionally, required for formate dehydrogenase (FDH) activity. Acts as a sulfur carrier protein that transfers sulfur from IscS to the molybdenum cofactor prior to its insertion into FDH. The polypeptide is Sulfur carrier protein FdhD (Shouchella clausii (strain KSM-K16) (Alkalihalobacillus clausii)).